Here is a 644-residue protein sequence, read N- to C-terminus: Exoribonuclease 2 (644 aa).

The 328-residue stretch at 189 to 516 (RQDLTALNFV…NHRLLKAVIK (328 aa)) folds into the RNB domain. Positions 561–643 (NTRFAAEIID…ETRSIIARPA (83 aa)) constitute an S1 motif domain.

It belongs to the RNR ribonuclease family. RNase II subfamily.

It is found in the cytoplasm. It catalyses the reaction Exonucleolytic cleavage in the 3'- to 5'-direction to yield nucleoside 5'-phosphates.. Involved in mRNA degradation. Hydrolyzes single-stranded polyribonucleotides processively in the 3' to 5' direction. This is Exoribonuclease 2 from Salmonella gallinarum (strain 287/91 / NCTC 13346).